The chain runs to 344 residues: GTP 3',8-cyclase (344 aa).

The Radical SAM core domain occupies 19–244 (PFGRTISYLR…MDLAESTGGP (226 aa)). R28 is a GTP binding site. C35 and C39 together coordinate [4Fe-4S] cluster. Y41 lines the S-adenosyl-L-methionine pocket. C42 serves as a coordination point for [4Fe-4S] cluster. R77 lines the GTP pocket. G81 contacts S-adenosyl-L-methionine. T111 is a binding site for GTP. An S-adenosyl-L-methionine-binding site is contributed by S135. Position 171 (K171) interacts with GTP. Residue M205 coordinates S-adenosyl-L-methionine. The [4Fe-4S] cluster site is built by C268 and C271. 273–275 (RVR) is a binding site for GTP. [4Fe-4S] cluster is bound at residue C285.

Belongs to the radical SAM superfamily. MoaA family. In terms of assembly, monomer and homodimer. It depends on [4Fe-4S] cluster as a cofactor.

The catalysed reaction is GTP + AH2 + S-adenosyl-L-methionine = (8S)-3',8-cyclo-7,8-dihydroguanosine 5'-triphosphate + 5'-deoxyadenosine + L-methionine + A + H(+). Its pathway is cofactor biosynthesis; molybdopterin biosynthesis. Functionally, catalyzes the cyclization of GTP to (8S)-3',8-cyclo-7,8-dihydroguanosine 5'-triphosphate. The chain is GTP 3',8-cyclase from Bradyrhizobium diazoefficiens (strain JCM 10833 / BCRC 13528 / IAM 13628 / NBRC 14792 / USDA 110).